Consider the following 201-residue polypeptide: MAQHDENVVWHPHPVTVAQREQLHGHRGVVLWFTGLSGSGKSTVAGALEEALYQQGVSTYLLDGDNVRHGLCSDLGFSDDDRKENIRRVGEVASLMADAGLVVLTAFISPHRAERQMVRERVGHDRFIEVFVDTPLAICETRDPKGLYKKARAGELKNFTGIDAVYEAPESPQIHLDGQQLVTNLVSQLLDLLRQDDIIRS.

35–42 (GLSGSGKS) provides a ligand contact to ATP. Ser109 functions as the Phosphoserine intermediate in the catalytic mechanism.

It belongs to the APS kinase family.

The catalysed reaction is adenosine 5'-phosphosulfate + ATP = 3'-phosphoadenylyl sulfate + ADP + H(+). It participates in sulfur metabolism; hydrogen sulfide biosynthesis; sulfite from sulfate: step 2/3. Catalyzes the synthesis of activated sulfate. This is Adenylyl-sulfate kinase from Enterobacter sp. (strain 638).